Here is a 261-residue protein sequence, read N- to C-terminus: Uridine-cytidine kinase 2-B (261 aa).

29–37 (GGTASGKSS) serves as a coordination point for ATP. Substrate is bound by residues Asp86, Tyr114, His119, Arg168, Arg178, and Gln186. Residue Asp215 participates in ATP binding. The segment at 238-261 (RQNGFQNGHGTPRQRRTSESSRPH) is disordered.

It belongs to the uridine kinase family. As to quaternary structure, homotetramer.

It carries out the reaction uridine + ATP = UMP + ADP + H(+). It catalyses the reaction cytidine + ATP = CMP + ADP + H(+). Its pathway is pyrimidine metabolism; CTP biosynthesis via salvage pathway; CTP from cytidine: step 1/3. The protein operates within pyrimidine metabolism; UMP biosynthesis via salvage pathway; UMP from uridine: step 1/1. Its function is as follows. Phosphorylates uridine and cytidine to uridine monophosphate and cytidine monophosphate. Does not phosphorylate deoxyribonucleosides or purine ribonucleosides. Can use ATP or GTP as a phosphate donor. In Danio rerio (Zebrafish), this protein is Uridine-cytidine kinase 2-B (uck2b).